The chain runs to 334 residues: MGNCLYPVETLSLDKNGTQFTFDSWNYSFEDNYSYELSSDYSLTPAAPCYSCNLLDRSSLPFFMLTSVLGMLASGSILFAILRPFFHWQICPSWPILAELAVGSALFSIAVPILAPGLHSAHSTALCNLGYWVWYTSAFAQALLIGCYACLNPRLNIGQLRGFTLGLSVGLWGAAALSGLPVALASDVYNGFCTFPSSRDMEALKYTHYAICFTIFTVLPLTLLAAKGLKIALSKGPGPWVSVLWIWFIFWWPHGMVLIFDALVRSKTVLLYTCQSQKILDAMLNVTEALSMLHCVATPLLLALFCHQTTRRSLSSLSLPTRQASQMDALAGKS.

The Extracellular portion of the chain corresponds to 1 to 61; sequence MGNCLYPVET…CNLLDRSSLP (61 aa). N-linked (GlcNAc...) asparagine glycosylation is found at N16, N26, and N32. Intrachain disulfides connect C49/C274 and C127/C193. Residues 62-82 traverse the membrane as a helical segment; sequence FFMLTSVLGMLASGSILFAIL. Residues 83–93 are Cytoplasmic-facing; sequence RPFFHWQICPS. Residues 94–114 form a helical membrane-spanning segment; it reads WPILAELAVGSALFSIAVPIL. At 115-127 the chain is on the extracellular side; sequence APGLHSAHSTALC. The chain crosses the membrane as a helical span at residues 128–151; sequence NLGYWVWYTSAFAQALLIGCYACL. Over 152–164 the chain is Cytoplasmic; it reads NPRLNIGQLRGFT. Residues 165–185 form a helical membrane-spanning segment; that stretch reads LGLSVGLWGAAALSGLPVALA. Residues 186–205 lie on the Extracellular side of the membrane; the sequence is SDVYNGFCTFPSSRDMEALK. Residues 206–226 form a helical membrane-spanning segment; sequence YTHYAICFTIFTVLPLTLLAA. Over 227–242 the chain is Cytoplasmic; sequence KGLKIALSKGPGPWVS. The helical transmembrane segment at 243–263 threads the bilayer; sequence VLWIWFIFWWPHGMVLIFDAL. The Extracellular segment spans residues 264–285; it reads VRSKTVLLYTCQSQKILDAMLN. N285 carries an N-linked (GlcNAc...) asparagine glycan. Residues 286–306 traverse the membrane as a helical segment; that stretch reads VTEALSMLHCVATPLLLALFC. The Cytoplasmic portion of the chain corresponds to 307–334; the sequence is HQTTRRSLSSLSLPTRQASQMDALAGKS.

This sequence belongs to the G-protein coupled receptor 1 family. Atypical chemokine receptor subfamily. In terms of tissue distribution, expressed in liver and brain.

Its subcellular location is the early endosome. It is found in the recycling endosome. The protein resides in the membrane. Functionally, atypical chemokine receptor that controls chemokine levels and localization via high-affinity chemokine binding that is uncoupled from classic ligand-driven signal transduction cascades, resulting instead in chemokine sequestration, degradation, or transcytosis. Also known as interceptor (internalizing receptor) or chemokine-scavenging receptor or chemokine decoy receptor. Has a promiscuous chemokine-binding profile, interacting with inflammatory chemokines of both the CXC and the CC subfamilies but not with homeostatic chemokines. Acts as a receptor for chemokines including CCL2, CCL5, CCL7, CCL11, CCL13, CCL14, CCL17, CXCL5, CXCL6, IL8/CXCL8, CXCL11, GRO, RANTES, MCP-1 and TARC. May regulate chemokine bioavailability and, consequently, leukocyte recruitment through two distinct mechanisms: when expressed in endothelial cells, it sustains the abluminal to luminal transcytosis of tissue-derived chemokines and their subsequent presentation to circulating leukocytes; when expressed in erythrocytes, serves as blood reservoir of cognate chemokines but also as a chemokine sink, buffering potential surges in plasma chemokine levels. In terms of biological role, (Microbial infection) Acts as a receptor for the malaria parasite Plasmodium yoelii in mature erythrocytes but not reticulocytes. The protein is Atypical chemokine receptor 1 (Ackr1) of Mus musculus (Mouse).